Consider the following 671-residue polypeptide: ATP-dependent zinc metalloprotease FtsH (671 aa).

At M1 to N22 the chain is on the cytoplasmic side. Residues P23–G43 form a helical membrane-spanning segment. Residues E44 to G130 are Periplasmic-facing. A helical transmembrane segment spans residues F131–F151. At L152–A671 the chain is on the cytoplasmic side. An ATP-binding site is contributed by G224–T231. H447 contributes to the Zn(2+) binding site. E448 is a catalytic residue. 2 residues coordinate Zn(2+): H451 and D525. The tract at residues E630–A671 is disordered.

This sequence in the central section; belongs to the AAA ATPase family. In the C-terminal section; belongs to the peptidase M41 family. In terms of assembly, homohexamer. Zn(2+) serves as cofactor.

Its subcellular location is the cell inner membrane. Acts as a processive, ATP-dependent zinc metallopeptidase for both cytoplasmic and membrane proteins. Plays a role in the quality control of integral membrane proteins. The sequence is that of ATP-dependent zinc metalloprotease FtsH from Sulfurovum sp. (strain NBC37-1).